The primary structure comprises 151 residues: Large ribosomal subunit protein bL9 (151 aa).

The protein belongs to the bacterial ribosomal protein bL9 family.

Functionally, binds to the 23S rRNA. The sequence is that of Large ribosomal subunit protein bL9 from Mycolicibacterium smegmatis (strain ATCC 700084 / mc(2)155) (Mycobacterium smegmatis).